A 458-amino-acid polypeptide reads, in one-letter code: MSFDFIKDKNKHIHFIGIGGISMSGLAEILLYNNFSISGSDMNSSPITEKLKDKGAKIYIGHKKENIKDADLIVYTAAIASDNPEIIEAKEKNIKLMDRADFLGNLMKGYKYNIAISGTHGKTTTTSMLSHVALKANVDPTILVGGNLDIINGNVRVGESDFFITEACEYKSSFLKFFPYIGVILNIDADHLDYYKDLDDIKNAFSKFIKLIPKDGYLVAYGEDKNIQSIIKEANCNVITYGINSGDIQAHNIEYDEKACGNFDVVKDNQKLFSVKLNVPGKHNILNSLASICIGLASNMKDKDIIEGIESFFGTHRRFELKGCKNNITVIDDYAHHPTEISATLDAAKKYPHNKLFCVFQPHTYSRTLTLFDDFTKCFDNADEIILADIYAAREKDTGIISSDMLGDKLRDRGLKCTNFHKFDDIKNYLIENAKDGDLILTVGAGDIYKVGEMYINL.

Residue 118–124 (GTHGKTT) coordinates ATP.

Belongs to the MurCDEF family.

The protein resides in the cytoplasm. The enzyme catalyses UDP-N-acetyl-alpha-D-muramate + L-alanine + ATP = UDP-N-acetyl-alpha-D-muramoyl-L-alanine + ADP + phosphate + H(+). It functions in the pathway cell wall biogenesis; peptidoglycan biosynthesis. Functionally, cell wall formation. The chain is UDP-N-acetylmuramate--L-alanine ligase from Clostridium botulinum (strain Langeland / NCTC 10281 / Type F).